The chain runs to 452 residues: Nebulette (452 aa).

The tract at residues 1–26 (MKVPVSGDVKEETEEENVEQEENQEA) is disordered. Residues 11–23 (EETEEENVEQEEN) are compositionally biased toward acidic residues. Nebulin repeat units lie at residues 29–63 (SLKP…KSKD), 64–98 (KCTF…ADLS), 101–135 (LYKD…AEKG), 138–172 (DYTH…GTHT), 173–199 (YTAE…EYKK), 206–240 (KEPS…NEMK), 263–278 (LASD…ENKG), 279–313 (LYHF…KNKG), 315–349 (SMLE…KEIK), 352–386 (SSLD…NEIK), 389–423 (GMEL…TEIK), and 426–452 (GMQV…VRMV).

Interacts (via nebulin repeats 1-5) with DESM (via rod region). Interacts (via SH3 domain) with XIRP2.

The protein resides in the cytoplasm. Binds to actin and plays an important role in the assembly of the Z-disk. May functionally link sarcomeric actin to the desmin intermediate filaments in the heart muscle sarcomeres. Isoform 2 might play a role in the assembly of focal adhesion. The chain is Nebulette (Nebl) from Mus musculus (Mouse).